We begin with the raw amino-acid sequence, 347 residues long: Phosphoribosylformylglycinamidine cyclo-ligase (347 aa).

The protein belongs to the AIR synthase family.

It is found in the cytoplasm. The enzyme catalyses 2-formamido-N(1)-(5-O-phospho-beta-D-ribosyl)acetamidine + ATP = 5-amino-1-(5-phospho-beta-D-ribosyl)imidazole + ADP + phosphate + H(+). It functions in the pathway purine metabolism; IMP biosynthesis via de novo pathway; 5-amino-1-(5-phospho-D-ribosyl)imidazole from N(2)-formyl-N(1)-(5-phospho-D-ribosyl)glycinamide: step 2/2. This Prochlorococcus marinus subsp. pastoris (strain CCMP1986 / NIES-2087 / MED4) protein is Phosphoribosylformylglycinamidine cyclo-ligase.